Here is a 361-residue protein sequence, read N- to C-terminus: Dihydroorotate dehydrogenase (quinone) (361 aa).

FMN-binding positions include 67 to 71 (AGLDK) and T91. K71 is a binding site for substrate. 116-120 (NRMGF) is a binding site for substrate. FMN contacts are provided by N145 and N178. N178 lines the substrate pocket. S181 acts as the Nucleophile in catalysis. N183 is a substrate binding site. Residues K223 and G251 each contribute to the FMN site. 252–253 (NT) provides a ligand contact to substrate. Residues G273, G302, and 323–324 (YT) each bind FMN.

Belongs to the dihydroorotate dehydrogenase family. Type 2 subfamily. As to quaternary structure, monomer. FMN serves as cofactor.

Its subcellular location is the cell membrane. It carries out the reaction (S)-dihydroorotate + a quinone = orotate + a quinol. It participates in pyrimidine metabolism; UMP biosynthesis via de novo pathway; orotate from (S)-dihydroorotate (quinone route): step 1/1. Catalyzes the conversion of dihydroorotate to orotate with quinone as electron acceptor. The polypeptide is Dihydroorotate dehydrogenase (quinone) (Deinococcus geothermalis (strain DSM 11300 / CIP 105573 / AG-3a)).